We begin with the raw amino-acid sequence, 188 residues long: Josephin-2 (188 aa).

The Josephin domain occupies 11–188; it reads PPSVYHERQR…EEAGCWLNTS (178 aa). Cysteine 24 (nucleophile) is an active-site residue. Histidine 125 functions as the Proton acceptor in the catalytic mechanism.

It is found in the cytoplasm. The protein resides in the cytosol. It carries out the reaction Thiol-dependent hydrolysis of ester, thioester, amide, peptide and isopeptide bonds formed by the C-terminal Gly of ubiquitin (a 76-residue protein attached to proteins as an intracellular targeting signal).. Cleaves 'Lys-63'-linked poly-ubiquitin chains, and with lesser efficiency 'Lys-48'-linked poly-ubiquitin chains (in vitro). May act as a deubiquitinating enzyme. The sequence is that of Josephin-2 (Josd2) from Mus musculus (Mouse).